A 144-amino-acid polypeptide reads, in one-letter code: Small ribosomal subunit protein uS19 (144 aa).

Belongs to the universal ribosomal protein uS19 family.

Protein S19 forms a complex with S13 that binds strongly to the 16S ribosomal RNA. This chain is Small ribosomal subunit protein uS19 (rps19), found in Aeropyrum pernix (strain ATCC 700893 / DSM 11879 / JCM 9820 / NBRC 100138 / K1).